Reading from the N-terminus, the 668-residue chain is RNA-binding protein PIN4 (668 aa).

Residues methionine 1–alanine 77 form a disordered region. The span at asparagine 8 to asparagine 23 shows a compositional bias: low complexity. Polar residues predominate over residues threonine 24 to isoleucine 36. The span at glutamate 37–asparagine 46 shows a compositional bias: basic and acidic residues. Residues glycine 47 to threonine 74 show a composition bias toward polar residues. Position 56 is a phosphoserine (serine 56). In terms of domain architecture, RRM spans asparagine 85–methionine 163. A compositionally biased stretch (basic and acidic residues) spans glutamate 168–arginine 188. The interval glutamate 168–leucine 214 is disordered. Phosphoserine occurs at positions 189, 191, 194, and 197. The span at serine 189–asparagine 212 shows a compositional bias: low complexity. Residue threonine 305 is modified to Phosphothreonine. 2 disordered regions span residues glutamine 374–glutamine 398 and valine 420–proline 570. At serine 393 the chain carries Phosphoserine. Positions valine 420 to threonine 449 are enriched in low complexity. Residues proline 450–asparagine 478 show a composition bias toward polar residues. A Phosphoserine modification is found at serine 466. Low complexity predominate over residues serine 479–glutamine 508. Over residues alanine 509 to serine 551 the composition is skewed to polar residues. Position 541 is a phosphoserine (serine 541). Residues glutamine 552–glutamine 567 show a composition bias toward low complexity. Phosphoserine is present on residues serine 636, serine 638, serine 640, serine 653, and serine 655.

As to quaternary structure, interacts with RAD53. Hyperphosphorylated in response to DNA damage by MEC1.

It localises to the cytoplasm. Its function is as follows. Involved in normal G2/M phase transition of the mitotic cell cycle. In association with RAD53, also involved in checkpoint control in response to DNA damage. The sequence is that of RNA-binding protein PIN4 (PIN4) from Saccharomyces cerevisiae (strain ATCC 204508 / S288c) (Baker's yeast).